A 472-amino-acid chain; its full sequence is tRNA-2-methylthio-N(6)-dimethylallyladenosine synthase (472 aa).

The MTTase N-terminal domain occupies 22 to 138; sequence RSYWITTFGC…LETLLQQVDS (117 aa). C31, C67, C101, C173, C177, and C180 together coordinate [4Fe-4S] cluster. One can recognise a Radical SAM core domain in the interval 159–396; that stretch reads RDSAICGWVN…NALVERNARE (238 aa). The TRAM domain maps to 399–467; the sequence is IRYQGRTEEV…SFSLSGTPLP (69 aa).

The protein belongs to the methylthiotransferase family. MiaB subfamily. Monomer. [4Fe-4S] cluster is required as a cofactor.

Its subcellular location is the cytoplasm. It catalyses the reaction N(6)-dimethylallyladenosine(37) in tRNA + (sulfur carrier)-SH + AH2 + 2 S-adenosyl-L-methionine = 2-methylsulfanyl-N(6)-dimethylallyladenosine(37) in tRNA + (sulfur carrier)-H + 5'-deoxyadenosine + L-methionine + A + S-adenosyl-L-homocysteine + 2 H(+). In terms of biological role, catalyzes the methylthiolation of N6-(dimethylallyl)adenosine (i(6)A), leading to the formation of 2-methylthio-N6-(dimethylallyl)adenosine (ms(2)i(6)A) at position 37 in tRNAs that read codons beginning with uridine. The polypeptide is tRNA-2-methylthio-N(6)-dimethylallyladenosine synthase (Synechococcus sp. (strain CC9902)).